Reading from the N-terminus, the 111-residue chain is Large ribosomal subunit protein uL22 (111 aa).

It belongs to the universal ribosomal protein uL22 family. In terms of assembly, part of the 50S ribosomal subunit.

Functionally, this protein binds specifically to 23S rRNA; its binding is stimulated by other ribosomal proteins, e.g. L4, L17, and L20. It is important during the early stages of 50S assembly. It makes multiple contacts with different domains of the 23S rRNA in the assembled 50S subunit and ribosome. The globular domain of the protein is located near the polypeptide exit tunnel on the outside of the subunit, while an extended beta-hairpin is found that lines the wall of the exit tunnel in the center of the 70S ribosome. The polypeptide is Large ribosomal subunit protein uL22 (Chlamydia muridarum (strain MoPn / Nigg)).